Consider the following 77-residue polypeptide: Translation initiation factor IF-1, chloroplastic (77 aa).

The S1-like domain occupies 1-71; that stretch reads MKEQKWIHEG…SRGRIIYRLR (71 aa).

Belongs to the IF-1 family. In terms of assembly, component of the 30S ribosomal translation pre-initiation complex which assembles on the 30S ribosome in the order IF-2 and IF-3, IF-1 and N-formylmethionyl-tRNA(fMet); mRNA recruitment can occur at any time during PIC assembly.

It localises to the plastid. Its subcellular location is the chloroplast. One of the essential components for the initiation of protein synthesis. Stabilizes the binding of IF-2 and IF-3 on the 30S subunit to which N-formylmethionyl-tRNA(fMet) subsequently binds. Helps modulate mRNA selection, yielding the 30S pre-initiation complex (PIC). Upon addition of the 50S ribosomal subunit IF-1, IF-2 and IF-3 are released leaving the mature 70S translation initiation complex. The chain is Translation initiation factor IF-1, chloroplastic from Buxus microphylla (Littleleaf boxwood).